The primary structure comprises 488 residues: UDP-N-acetylmuramate--L-alanine ligase (488 aa).

127–133 (GTHGKTT) lines the ATP pocket.

The protein belongs to the MurCDEF family.

It localises to the cytoplasm. It catalyses the reaction UDP-N-acetyl-alpha-D-muramate + L-alanine + ATP = UDP-N-acetyl-alpha-D-muramoyl-L-alanine + ADP + phosphate + H(+). It functions in the pathway cell wall biogenesis; peptidoglycan biosynthesis. Cell wall formation. This Shewanella oneidensis (strain ATCC 700550 / JCM 31522 / CIP 106686 / LMG 19005 / NCIMB 14063 / MR-1) protein is UDP-N-acetylmuramate--L-alanine ligase.